A 337-amino-acid polypeptide reads, in one-letter code: Holliday junction branch migration complex subunit RuvB (337 aa).

The segment at 1 to 181 (MQRLVEIERF…FGMNFRMQFY (181 aa)) is large ATPase domain (RuvB-L). ATP contacts are provided by residues L20, R21, G62, K65, T66, T67, 128 to 130 (EDF), R171, Y181, and R218. T66 lines the Mg(2+) pocket. Residues 182 to 252 (SPEELSKIIS…RAQYALDELG (71 aa)) form a small ATPAse domain (RuvB-S) region. The tract at residues 255–337 (SYGFDEMDIK…MPALDDGGLF (83 aa)) is head domain (RuvB-H). DNA contacts are provided by R309 and R314.

This sequence belongs to the RuvB family. In terms of assembly, homohexamer. Forms an RuvA(8)-RuvB(12)-Holliday junction (HJ) complex. HJ DNA is sandwiched between 2 RuvA tetramers; dsDNA enters through RuvA and exits via RuvB. An RuvB hexamer assembles on each DNA strand where it exits the tetramer. Each RuvB hexamer is contacted by two RuvA subunits (via domain III) on 2 adjacent RuvB subunits; this complex drives branch migration. In the full resolvosome a probable DNA-RuvA(4)-RuvB(12)-RuvC(2) complex forms which resolves the HJ.

It localises to the cytoplasm. It catalyses the reaction ATP + H2O = ADP + phosphate + H(+). Its function is as follows. The RuvA-RuvB-RuvC complex processes Holliday junction (HJ) DNA during genetic recombination and DNA repair, while the RuvA-RuvB complex plays an important role in the rescue of blocked DNA replication forks via replication fork reversal (RFR). RuvA specifically binds to HJ cruciform DNA, conferring on it an open structure. The RuvB hexamer acts as an ATP-dependent pump, pulling dsDNA into and through the RuvAB complex. RuvB forms 2 homohexamers on either side of HJ DNA bound by 1 or 2 RuvA tetramers; 4 subunits per hexamer contact DNA at a time. Coordinated motions by a converter formed by DNA-disengaged RuvB subunits stimulates ATP hydrolysis and nucleotide exchange. Immobilization of the converter enables RuvB to convert the ATP-contained energy into a lever motion, pulling 2 nucleotides of DNA out of the RuvA tetramer per ATP hydrolyzed, thus driving DNA branch migration. The RuvB motors rotate together with the DNA substrate, which together with the progressing nucleotide cycle form the mechanistic basis for DNA recombination by continuous HJ branch migration. Branch migration allows RuvC to scan DNA until it finds its consensus sequence, where it cleaves and resolves cruciform DNA. This chain is Holliday junction branch migration complex subunit RuvB, found in Sulfurimonas denitrificans (strain ATCC 33889 / DSM 1251) (Thiomicrospira denitrificans (strain ATCC 33889 / DSM 1251)).